Consider the following 447-residue polypeptide: Serine/threonine-protein phosphatase 2A 55 kDa regulatory subunit B gamma isoform (447 aa).

7 WD repeats span residues 22 to 61, 87 to 128, 171 to 209, 220 to 260, 279 to 317, 334 to 375, and 410 to 446; these read TEADIISTVEFNHTGELLATGDKGGRVVIFQREPESKNAP, EIEE…KRPE, GHTYHINSISVNSDCETYMSADDLRINLWHLAVTDRSFN, DLTE…LCDK, EIISSVSDVKFSHSGRYMLTRDYLTVKVWDLNMEARPIE, ENDC…DVTL, and DFTKKILHTAWHPAENIIAIAATNNLYIFQDKVNSDV.

This sequence belongs to the phosphatase 2A regulatory subunit B family. PP2A consists of a common heterodimeric core enzyme, composed of a 36 kDa catalytic subunit (subunit C) and a 65 kDa constant regulatory subunit (PR65 or subunit A), that associates with a variety of regulatory subunits. Proteins that associate with the core dimer include three families of regulatory subunits B (the R2/B/PR55/B55, R3/B''/PR72/PR130/PR59 and R5/B'/B56 families), the 48 kDa variable regulatory subunit, viral proteins, and cell signaling molecules. Interacts with IER5. As to expression, highly expressed in brain.

Its function is as follows. The B regulatory subunit might modulate substrate selectivity and catalytic activity, and might also direct the localization of the catalytic enzyme to a particular subcellular compartment. The sequence is that of Serine/threonine-protein phosphatase 2A 55 kDa regulatory subunit B gamma isoform (PPP2R2C) from Oryctolagus cuniculus (Rabbit).